Here is a 294-residue protein sequence, read N- to C-terminus: MRFVIVTGLSGAGKTQAIRSLEDLGYFCIDNLPPALIPKFAQVCYESESKINKIALVIDIRGGEFFDNLFESLKYLKEAGYKYEILFLDADNEVLIKRFKESRRKHPLAPNGRILNGIQMERKKLKTLYNMANNVIDTSKLATRELREKINSIYQEEGQIESKLIVTVVSFGFKYGIPVDSDLVFDVRFLPNPFYIPELKRFSGIEKPVKDYVMSFDQTKEFVNKIEQLLKFLIPNYLKEGKRQLIVSIGCTGGRHRSVTIANEIYERLKNDGETVNIDHRDIEEDINKGGKKL.

8 to 15 contributes to the ATP binding site; that stretch reads GLSGAGKT. Residue 59–62 participates in GTP binding; the sequence is DIRG.

It belongs to the RapZ-like family.

Functionally, displays ATPase and GTPase activities. This Clostridium acetobutylicum (strain ATCC 824 / DSM 792 / JCM 1419 / IAM 19013 / LMG 5710 / NBRC 13948 / NRRL B-527 / VKM B-1787 / 2291 / W) protein is Nucleotide-binding protein CA_C0511.